Consider the following 248-residue polypeptide: Tryptophan synthase alpha chain (248 aa).

Catalysis depends on proton acceptor residues E36 and D47.

The protein belongs to the TrpA family. As to quaternary structure, tetramer of two alpha and two beta chains.

The enzyme catalyses (1S,2R)-1-C-(indol-3-yl)glycerol 3-phosphate + L-serine = D-glyceraldehyde 3-phosphate + L-tryptophan + H2O. The protein operates within amino-acid biosynthesis; L-tryptophan biosynthesis; L-tryptophan from chorismate: step 5/5. Functionally, the alpha subunit is responsible for the aldol cleavage of indoleglycerol phosphate to indole and glyceraldehyde 3-phosphate. The chain is Tryptophan synthase alpha chain from Archaeoglobus fulgidus (strain ATCC 49558 / DSM 4304 / JCM 9628 / NBRC 100126 / VC-16).